We begin with the raw amino-acid sequence, 50 residues long: Large ribosomal subunit protein bL33 (50 aa).

The protein belongs to the bacterial ribosomal protein bL33 family.

This is Large ribosomal subunit protein bL33 from Citrifermentans bemidjiense (strain ATCC BAA-1014 / DSM 16622 / JCM 12645 / Bem) (Geobacter bemidjiensis).